Consider the following 156-residue polypeptide: MPRKGPVAKRDVLPDPIYNSKLVSRLINKMMIDGKRGKSQTILYKSFDIIKERTGNEAMEVFEQALKNIMPVLEVKARRVGGANYQVPVEVRPDRRTTLGLRWLVNYARLRGEKTMEERLANEILDAANNTGAAVKKREDTHKMAEANKAFAHYRW.

The protein belongs to the universal ribosomal protein uS7 family. As to quaternary structure, part of the 30S ribosomal subunit. Contacts proteins S9 and S11.

Its function is as follows. One of the primary rRNA binding proteins, it binds directly to 16S rRNA where it nucleates assembly of the head domain of the 30S subunit. Is located at the subunit interface close to the decoding center, probably blocks exit of the E-site tRNA. In Bacillus pumilus (strain SAFR-032), this protein is Small ribosomal subunit protein uS7.